Consider the following 58-residue polypeptide: Protein SHMOOSE (58 aa).

Residues 27–58 (FGATPNKSNNHAHYYNHPNPDFPNSPHPYHPR) are disordered. The segment covering 35–45 (NNHAHYYNHPN) has biased composition (low complexity). A compositionally biased stretch (pro residues) spans 46–58 (PDFPNSPHPYHPR).

Interacts with IMMT/mitofilin. Detected in cerebrospinal fluid (at protein level).

It is found in the mitochondrion. Its subcellular location is the nucleus. Functionally, increases neural cell metabolic activity and mitochondrial oxygen consumption rate. The polypeptide is Protein SHMOOSE (Homo sapiens (Human)).